Reading from the N-terminus, the 549-residue chain is Hydroxylamine reductase (549 aa).

The [2Fe-2S] cluster site is built by Cys-3, Cys-6, Cys-18, and Cys-25. His-248, Glu-272, Cys-316, Cys-404, Cys-432, Cys-457, Glu-491, and Lys-493 together coordinate hybrid [4Fe-2O-2S] cluster. Residue Cys-404 is modified to Cysteine persulfide.

The protein belongs to the HCP family. It depends on [2Fe-2S] cluster as a cofactor. Hybrid [4Fe-2O-2S] cluster is required as a cofactor.

It localises to the cytoplasm. It catalyses the reaction A + NH4(+) + H2O = hydroxylamine + AH2 + H(+). In terms of biological role, catalyzes the reduction of hydroxylamine to form NH(3) and H(2)O. This chain is Hydroxylamine reductase, found in Aeromonas hydrophila subsp. hydrophila (strain ATCC 7966 / DSM 30187 / BCRC 13018 / CCUG 14551 / JCM 1027 / KCTC 2358 / NCIMB 9240 / NCTC 8049).